Reading from the N-terminus, the 360-residue chain is GTPase Obg (360 aa).

The 156-residue stretch at 1–156 (MFVDSVEIII…KCVRLELKLI (156 aa)) folds into the Obg domain. Residues 157–360 (ADIGLVGFPN…LKFVLLEALP (204 aa)) enclose the OBG-type G domain. Residues 163–170 (GFPNAGKS), 188–192 (FTTLV), 210–213 (DIPG), 279–282 (NKCD), and 341–343 (SAV) each bind GTP. Mg(2+) is bound by residues serine 170 and threonine 190.

It belongs to the TRAFAC class OBG-HflX-like GTPase superfamily. OBG GTPase family. In terms of assembly, monomer. Mg(2+) is required as a cofactor.

It localises to the cytoplasm. Its function is as follows. An essential GTPase which binds GTP, GDP and possibly (p)ppGpp with moderate affinity, with high nucleotide exchange rates and a fairly low GTP hydrolysis rate. Plays a role in control of the cell cycle, stress response, ribosome biogenesis and in those bacteria that undergo differentiation, in morphogenesis control. The protein is GTPase Obg of Helicobacter pylori (strain ATCC 700392 / 26695) (Campylobacter pylori).